The primary structure comprises 393 residues: NAD(P)H-quinone oxidoreductase subunit H, chloroplastic (393 aa).

Belongs to the complex I 49 kDa subunit family. NDH is composed of at least 16 different subunits, 5 of which are encoded in the nucleus.

The protein resides in the plastid. It localises to the chloroplast thylakoid membrane. The catalysed reaction is a plastoquinone + NADH + (n+1) H(+)(in) = a plastoquinol + NAD(+) + n H(+)(out). It catalyses the reaction a plastoquinone + NADPH + (n+1) H(+)(in) = a plastoquinol + NADP(+) + n H(+)(out). Its function is as follows. NDH shuttles electrons from NAD(P)H:plastoquinone, via FMN and iron-sulfur (Fe-S) centers, to quinones in the photosynthetic chain and possibly in a chloroplast respiratory chain. The immediate electron acceptor for the enzyme in this species is believed to be plastoquinone. Couples the redox reaction to proton translocation, and thus conserves the redox energy in a proton gradient. This is NAD(P)H-quinone oxidoreductase subunit H, chloroplastic from Oenothera biennis (German evening primrose).